Reading from the N-terminus, the 127-residue chain is Major sperm protein isoform alpha (127 aa).

A2 carries the N-acetylalanine modification. The MSP domain occupies 9–126 (DINTQPSQKI…RRKNLPIEYN (118 aa)).

In terms of assembly, forms filaments 10 nm wide, with a characteristic substructure repeating axially at 9 nm. In terms of tissue distribution, sperm.

It is found in the cell projection. The protein resides in the pseudopodium. Its subcellular location is the cytoplasm. The protein localises to the cytoskeleton. Central component in molecular interactions underlying sperm crawling. Forms an extensive filament system that extends from sperm villipoda, along the leading edge of the pseudopod. In Ascaris suum (Pig roundworm), this protein is Major sperm protein isoform alpha.